The sequence spans 74 residues: Conotoxin Bu4 (74 aa).

The first 22 residues, 1 to 22, serve as a signal peptide directing secretion; the sequence is MKLTCVVIVAVLLLTACQLIIA. Positions 23-45 are excised as a propeptide; sequence EDSRGTQLHRALRKATKLSVSTR. Disulfide bonds link cysteine 47-cysteine 63, cysteine 54-cysteine 66, and cysteine 62-cysteine 73.

The protein belongs to the conotoxin O1 superfamily. In terms of tissue distribution, expressed by the venom duct.

Its subcellular location is the secreted. In Conus bullatus (Bubble cone), this protein is Conotoxin Bu4.